A 143-amino-acid polypeptide reads, in one-letter code: Nitrosuccinic acid decarboxylase npaB (143 aa).

It belongs to the carboxymuconolactone decarboxylase family. Mg(2+) is required as a cofactor.

It functions in the pathway mycotoxin biosynthesis. Functionally, nitrosuccinic acid decarboxylase; part of the gene cluster that mediates the biosynthesis of the deadly neurotoxic nitroalkane 3-nitropropanoic acid (3-NPA) that acts as an antimetabolite of succinate and irreversibly inhibits succinate dehydrogenase and disrupts mitochondrial oxidative phosphorylation. NpaB facilitates decarboxylation of nitrosuccinic acid produced by the nitrosuccinic acid synthase npaA to yield the final product of the cluster, the lethal mycotoxin 3-NPA. This is Nitrosuccinic acid decarboxylase npaB from Metarhizium robertsii (strain ARSEF 23 / ATCC MYA-3075) (Metarhizium anisopliae (strain ARSEF 23)).